Reading from the N-terminus, the 100-residue chain is uncharacterized protein (100 aa).

The protein resides in the cytoplasm. It is found in the endoplasmic reticulum. This is an uncharacterized protein from Schizosaccharomyces pombe (strain 972 / ATCC 24843) (Fission yeast).